The primary structure comprises 205 residues: Regulator of G-protein signaling 4 (205 aa).

Residues cysteine 2, cysteine 12, and cysteine 95 are each lipidated (S-palmitoyl cysteine). One can recognise an RGS domain in the interval 62–178; sequence SLENLISHEC…LKSRFYLDLV (117 aa).

Palmitoylated on Cys-2 and/or Cys-12. In terms of processing, phosphorylated by cyclic GMP-dependent protein kinase.

Its function is as follows. Inhibits signal transduction by increasing the GTPase activity of G protein alpha subunits thereby driving them into their inactive GDP-bound form. Activity on G(z)-alpha is inhibited by phosphorylation of the G-protein. Activity on G(z)-alpha and G(i)-alpha-1 is inhibited by palmitoylation of the G-protein. The polypeptide is Regulator of G-protein signaling 4 (RGS4) (Bos taurus (Bovine)).